Consider the following 427-residue polypeptide: Glutamate-1-semialdehyde 2,1-aminomutase (427 aa).

Lysine 265 is subject to N6-(pyridoxal phosphate)lysine.

It belongs to the class-III pyridoxal-phosphate-dependent aminotransferase family. HemL subfamily. Homodimer. It depends on pyridoxal 5'-phosphate as a cofactor.

Its subcellular location is the cytoplasm. The enzyme catalyses (S)-4-amino-5-oxopentanoate = 5-aminolevulinate. The protein operates within porphyrin-containing compound metabolism; protoporphyrin-IX biosynthesis; 5-aminolevulinate from L-glutamyl-tRNA(Glu): step 2/2. This Burkholderia multivorans (strain ATCC 17616 / 249) protein is Glutamate-1-semialdehyde 2,1-aminomutase.